A 98-amino-acid polypeptide reads, in one-letter code: DNA-binding protein Fis (98 aa).

Positions 74–93 (QTRAALMMGINRGTLRKKLK) form a DNA-binding region, H-T-H motif.

It belongs to the transcriptional regulatory Fis family. As to quaternary structure, homodimer.

Activates ribosomal RNA transcription. Plays a direct role in upstream activation of rRNA promoters. In Photorhabdus laumondii subsp. laumondii (strain DSM 15139 / CIP 105565 / TT01) (Photorhabdus luminescens subsp. laumondii), this protein is DNA-binding protein Fis.